The primary structure comprises 378 residues: Alcohol dehydrogenase 1 (378 aa).

Zn(2+) is bound at residue C48. H49–L53 contributes to the NAD(+) binding site. The Zn(2+) site is built by H69, C99, C102, C105, C113, and C177. NAD(+) is bound by residues G202–G207, D226, K231, T274–V276, I297–A299, and T321–F323.

Belongs to the zinc-containing alcohol dehydrogenase family. Class-IV subfamily. As to quaternary structure, homodimer. Requires Zn(2+) as cofactor. Present in non-glandular trichome cells.

It is found in the nucleus. The protein localises to the cytoplasm. It localises to the cytosol. It catalyses the reaction (+)-artemisinic alcohol + NAD(+) = (+)-artemisinic aldehyde + NADH + H(+). It participates in sesquiterpene biosynthesis. In terms of biological role, involved in the biosynthesis of the antimalarial endoperoxide artemisinin. Catalyzes the conversion of artemisinic alcohol into artemisinic aldehyde. This is Alcohol dehydrogenase 1 from Artemisia annua (Sweet wormwood).